The following is a 155-amino-acid chain: Small ribosomal subunit protein uS7 (155 aa).

Belongs to the universal ribosomal protein uS7 family. Part of the 30S ribosomal subunit. Contacts proteins S9 and S11.

Functionally, one of the primary rRNA binding proteins, it binds directly to 16S rRNA where it nucleates assembly of the head domain of the 30S subunit. Is located at the subunit interface close to the decoding center, probably blocks exit of the E-site tRNA. In Kosmotoga olearia (strain ATCC BAA-1733 / DSM 21960 / TBF 19.5.1), this protein is Small ribosomal subunit protein uS7.